We begin with the raw amino-acid sequence, 525 residues long: Bestrophin homolog 15 (525 aa).

The next 4 helical transmembrane spans lie at 36–56, 71–91, 237–257, and 273–293; these read LFMF…NLII, FDQN…VTII, LAYP…ALIA, and ILYP…VVGW.

This sequence belongs to the anion channel-forming bestrophin (TC 1.A.46) family. Calcium-sensitive chloride channel subfamily. In terms of assembly, forms oligomers.

It is found in the cell membrane. Functionally, forms chloride channels. This chain is Bestrophin homolog 15 (best-15), found in Caenorhabditis elegans.